The chain runs to 104 residues: Large ribosomal subunit protein uL24 (104 aa).

This sequence belongs to the universal ribosomal protein uL24 family. As to quaternary structure, part of the 50S ribosomal subunit.

One of two assembly initiator proteins, it binds directly to the 5'-end of the 23S rRNA, where it nucleates assembly of the 50S subunit. Its function is as follows. One of the proteins that surrounds the polypeptide exit tunnel on the outside of the subunit. This Nitrobacter winogradskyi (strain ATCC 25391 / DSM 10237 / CIP 104748 / NCIMB 11846 / Nb-255) protein is Large ribosomal subunit protein uL24.